A 550-amino-acid polypeptide reads, in one-letter code: Retron Ec78 probable ATPase (550 aa).

An ATP-binding motif is present at residues 93–100; it reads GNNGKGKT.

In terms of biological role, probable ATPase component of antiviral defense system retron Ec78, composed of a non-coding RNA (ncRNA), a reverse transcriptase (RT), this protein and a putative HNH endonuclease. Expression of retron Ec78 confers protection against bacteriophage T5. At multiplicity of infection (MOI) of 0.02 cultures slow growth when infected with T5 but do not collapse, at MOI 2 cultures enter growth stasis. This Escherichia coli protein is Retron Ec78 probable ATPase.